The following is a 436-amino-acid chain: 3-ketoacyl-CoA thiolase (436 aa).

C99 serves as the catalytic Acyl-thioester intermediate. Active-site proton acceptor residues include H392 and C422.

This sequence belongs to the thiolase-like superfamily. Thiolase family. Heterotetramer of two alpha chains (FadJ) and two beta chains (FadI).

It localises to the cytoplasm. The catalysed reaction is an acyl-CoA + acetyl-CoA = a 3-oxoacyl-CoA + CoA. The protein operates within lipid metabolism; fatty acid beta-oxidation. In terms of biological role, catalyzes the final step of fatty acid oxidation in which acetyl-CoA is released and the CoA ester of a fatty acid two carbons shorter is formed. In Salmonella heidelberg (strain SL476), this protein is 3-ketoacyl-CoA thiolase.